The following is a 155-amino-acid chain: Putative pre-16S rRNA nuclease (155 aa).

Belongs to the YqgF nuclease family.

It localises to the cytoplasm. Could be a nuclease involved in processing of the 5'-end of pre-16S rRNA. The polypeptide is Putative pre-16S rRNA nuclease (Xanthomonas oryzae pv. oryzae (strain MAFF 311018)).